The chain runs to 568 residues: Urease subunit alpha (568 aa).

Residues 130–568 (GGIDTHIHFI…LPMAQRYFLF (439 aa)) enclose the Urease domain. The Ni(2+) site is built by histidine 135, histidine 137, and lysine 218. N6-carboxylysine is present on lysine 218. Residue histidine 220 coordinates substrate. 2 residues coordinate Ni(2+): histidine 247 and histidine 273. Histidine 321 functions as the Proton donor in the catalytic mechanism. A Ni(2+)-binding site is contributed by aspartate 361.

Belongs to the metallo-dependent hydrolases superfamily. Urease alpha subunit family. In terms of assembly, heterotrimer of UreA (gamma), UreB (beta) and UreC (alpha) subunits. Three heterotrimers associate to form the active enzyme. The cofactor is Ni cation. In terms of processing, carboxylation allows a single lysine to coordinate two nickel ions.

It is found in the cytoplasm. The catalysed reaction is urea + 2 H2O + H(+) = hydrogencarbonate + 2 NH4(+). Its pathway is nitrogen metabolism; urea degradation; CO(2) and NH(3) from urea (urease route): step 1/1. The sequence is that of Urease subunit alpha from Burkholderia vietnamiensis (strain G4 / LMG 22486) (Burkholderia cepacia (strain R1808)).